The primary structure comprises 702 residues: Phosphatase and actin regulator 4 (702 aa).

Disordered regions lie at residues 1–37 (MEDP…KSKF), 72–194 (RKPR…SSGG), and 222–363 (NLSV…PFPA). One copy of the RPEL 1 repeat lies at 63-88 (EVLERKISMRKPREELVKRGVLLEDP). The span at 72–84 (RKPREELVKRGVL) shows a compositional bias: basic and acidic residues. A compositionally biased stretch (polar residues) spans 106–120 (GHTTPIGNARSSSPV). A phosphoserine mark is found at serine 116, serine 118, serine 131, and serine 147. The span at 147–156 (STGSQPNSEA) shows a compositional bias: polar residues. The span at 163-173 (VPKPPLLPPKR) shows a compositional bias: pro residues. Residues 233-250 (TLPAAPASTNTTATPSLT) are compositionally biased toward low complexity. 2 positions are modified to phosphoserine: serine 270 and serine 291. The segment covering 301 to 318 (PSTSVPTLESAAAITTKT) has biased composition (polar residues). Phosphoserine occurs at positions 342 and 344. Positions 342–362 (SPSPPLPTHIPPEPPRTPPFP) are enriched in pro residues. Threonine 358 is subject to Phosphothreonine. Serine 427 carries the post-translational modification Phosphoserine. Threonine 432 is subject to Phosphothreonine. Serine 443, serine 453, and serine 464 each carry phosphoserine. Residues 469-536 (IEMLKVPDDE…EEDEDESYQS (68 aa)) are disordered. Residues 484-497 (TCPSTFSEEMTPTS) are compositionally biased toward polar residues. Residues 508 to 518 (EEEEKESDSDS) show a composition bias toward acidic residues. Phosphoserine is present on residues serine 514, serine 516, serine 557, and serine 590. RPEL repeat units follow at residues 583–608 (NTLI…QPKN) and 621–646 (RRLT…RFNE). The disordered stretch occupies residues 592 to 615 (RPTPEELEQRNILQPKNEADRQAE). Serine 628 carries the post-translational modification Phosphoserine.

It belongs to the phosphatase and actin regulator family. Binds PPP1CA and actin.

Its subcellular location is the cytoplasm. It localises to the cell projection. It is found in the lamellipodium. Regulator of protein phosphatase 1 (PP1) required for neural tube and optic fissure closure, and enteric neural crest cell (ENCCs) migration during development. Acts as an activator of PP1 by interacting with PPP1CA and preventing phosphorylation of PPP1CA at 'Thr-320'. During neural tube closure, localizes to the ventral neural tube and activates PP1, leading to down-regulate cell proliferation within cranial neural tissue and the neural retina. Also acts as a regulator of migration of enteric neural crest cells (ENCCs) by activating PP1, leading to dephosphorylation and subsequent activation of cofilin (COF1 or COF2) and repression of the integrin signaling through the RHO/ROCK pathway. In Homo sapiens (Human), this protein is Phosphatase and actin regulator 4 (PHACTR4).